The sequence spans 2242 residues: Transcription factor sma-9 (2242 aa).

Positions 120–383 (HQLAQQQAQQ…QQAQQAQLAQ (264 aa)) form a coiled coil. Low complexity predominate over residues 317 to 330 (AAQQAQAQNNASQQ). Disordered regions lie at residues 317–344 (AAQQ…SSTP), 494–553 (TPVA…SMSD), 583–617 (GAQS…SRSQ), 712–754 (LAAH…SSFP), and 1323–1349 (EDST…SPPL). The segment covering 331–344 (RPSVASTPALSSTP) has biased composition (polar residues). 2 stretches are compositionally biased toward low complexity: residues 494 to 523 (TPVA…ATSS) and 539 to 550 (SSSKAASSGNES). Residues 583 to 601 (GAQSSVDHDSNSGGSTRTS) show a composition bias toward polar residues. Over residues 1324–1338 (DSTSAEPSTSGQSLL) the composition is skewed to polar residues. 5 C2H2-type zinc fingers span residues 1447–1469 (YICD…IKSH), 1475–1499 (FNCT…SKTH), 1700–1722 (LKCD…QHTH), 1734–1760 (YQCS…HGVH), and 1790–1814 (FMCV…SKTH). A compositionally biased stretch (low complexity) spans 2029-2039 (SITSPIVSSST). 2 disordered regions span residues 2029 to 2059 (SITS…PTHT) and 2085 to 2107 (STDK…PRPI). Residues 2085–2099 (STDKAHASESLSDRL) are compositionally biased toward basic and acidic residues. C2H2-type zinc fingers lie at residues 2111–2134 (TKCQ…HVDH) and 2143–2167 (YKCP…VTAH). Residues 2219-2242 (HELYAQTQQGAGSSTSNQSPKAAN) form a disordered region. The span at 2223-2242 (AQTQQGAGSSTSNQSPKAAN) shows a compositional bias: polar residues.

In terms of tissue distribution, expressed in the ventral nerve cord (VNC), pharynx, intestine and seam cells (at protein level).

The protein localises to the nucleus. Its function is as follows. Transcription factor, probably acting as a transcriptional activator and repressor, involved in the TGF-beta-like dbl-1 signaling pathway. Plays a role in regulation of body size, and patterning of male-specific genital sensilla (simple sense organs), known as rays, and mating-associated structures, spicules. Required for the dorsoventral patterning of the postembryonic mesodermal lineage (M lineage), acting by antagonizing the TGF-beta-like dbl-1 signaling pathway, in part by repressing expression of transcription factor unc-130. Involved in egg-laying, perhaps via modulation of cholinergic neurotransmission. Involved in production of reactive oxygen species (ROS), acting downstream of the dbl-1 signaling pathway. Plays a role in the mitochondrial unfolded protein response (mtUPR). May play a role in modulating lifespan and in responses to proteotoxic stress. In terms of biological role, transcription factor, probably acting as a transcriptional activator. Required for patterning of male-specific genital sensilla (simple sense organs), known as rays. Dispensable for regulation of body size. In Caenorhabditis elegans, this protein is Transcription factor sma-9.